The sequence spans 725 residues: Beta-adducin (725 aa).

The disordered stretch occupies residues 1–22; sequence MSEDTVPEAASPPPSQGQHYFD. Ser11 and Ser25 each carry phosphoserine. Thr55 is modified (phosphothreonine). Phosphoserine is present on residues Ser60 and Ser344. The tract at residues 425–444 is interaction with calmodulin; it reads KQQKEKTRWLNTPNTYLRVN. Residues 525-725 form a disordered region; that stretch reads AEKSRSPSTE…KSKKKEKVES (201 aa). 2 positions are modified to phosphoserine: Ser530 and Ser532. Thr533 bears the Phosphothreonine mark. Phosphoserine is present on Ser535. Thr561 is modified (phosphothreonine). Residues 566-589 are compositionally biased toward basic and acidic residues; sequence EEYKKEVERKKLEQEQEGEKDIAT. 4 positions are modified to phosphoserine: Ser594, Ser598, Ser602, and Ser606. Residues 596–621 show a composition bias toward polar residues; the sequence is VKSTPASPVQSPSKAGTKSPAVSPSK. Thr612 is subject to Phosphothreonine. Phosphoserine occurs at positions 614, 618, and 620. The segment covering 622–631 has biased composition (basic and acidic residues); it reads TSEDTKKTEV. Thr674 is modified (phosphothreonine). Ser678, Ser685, Ser688, Ser692, Ser696, Ser698, Ser700, Ser702, and Ser712 each carry phosphoserine. Residues 687–700 show a composition bias toward low complexity; it reads TSGPLSPEGSPSKS. Residues 701 to 725 are compositionally biased toward basic residues; that stretch reads PSKKKKKFRTPSFLKKSKKKEKVES. The segment at 703–720 is interaction with calmodulin; the sequence is KKKKKFRTPSFLKKSKKK.

It belongs to the aldolase class II family. Adducin subfamily. As to quaternary structure, found in a complex with ADD2, DMTN and SLC2A1. Interacts with SLC2A1. Heterodimer of an alpha and a beta subunit.

The protein resides in the cytoplasm. Its subcellular location is the cytoskeleton. The protein localises to the cell membrane. Membrane-cytoskeleton-associated protein that promotes the assembly of the spectrin-actin network. Binds to the erythrocyte membrane receptor SLC2A1/GLUT1 and may therefore provide a link between the spectrin cytoskeleton to the plasma membrane. Binds to calmodulin. Calmodulin binds preferentially to the beta subunit. The polypeptide is Beta-adducin (Add2) (Mus musculus (Mouse)).